A 452-amino-acid polypeptide reads, in one-letter code: Tryptophan biosynthesis protein TrpCF (452 aa).

An indole-3-glycerol phosphate synthase region spans residues 1–256 (MQTVLAKIVA…AAVRRVLLGE (256 aa)). Positions 257–452 (NKVCGLTRAQ…ASVFQTLRAY (196 aa)) are N-(5'-phosphoribosyl)anthranilate isomerase.

The protein in the N-terminal section; belongs to the TrpC family. In the C-terminal section; belongs to the TrpF family. As to quaternary structure, monomer.

The enzyme catalyses N-(5-phospho-beta-D-ribosyl)anthranilate = 1-(2-carboxyphenylamino)-1-deoxy-D-ribulose 5-phosphate. It catalyses the reaction 1-(2-carboxyphenylamino)-1-deoxy-D-ribulose 5-phosphate + H(+) = (1S,2R)-1-C-(indol-3-yl)glycerol 3-phosphate + CO2 + H2O. It participates in amino-acid biosynthesis; L-tryptophan biosynthesis; L-tryptophan from chorismate: step 3/5. It functions in the pathway amino-acid biosynthesis; L-tryptophan biosynthesis; L-tryptophan from chorismate: step 4/5. Functionally, bifunctional enzyme that catalyzes two sequential steps of tryptophan biosynthetic pathway. The first reaction is catalyzed by the isomerase, coded by the TrpF domain; the second reaction is catalyzed by the synthase, coded by the TrpC domain. In Salmonella typhimurium (strain LT2 / SGSC1412 / ATCC 700720), this protein is Tryptophan biosynthesis protein TrpCF (trpC).